The chain runs to 560 residues: Membrane protein insertase YidC (560 aa).

A helical membrane pass occupies residues 1 to 21 (MDIKRTILIAALAVVSYVMVL). The segment at 42 to 66 (VAPGLPDGVPAGNNGASADVPSANA) is disordered. The next 5 helical transmembrane spans lie at 341–361 (LELT…FWLL), 367–387 (LLGN…GLFF), 437–457 (LGGC…YWVL), 468–488 (WILW…PIIM), and 515–535 (PIIF…YWVV).

This sequence belongs to the OXA1/ALB3/YidC family. Type 1 subfamily. Interacts with the Sec translocase complex via SecD. Specifically interacts with transmembrane segments of nascent integral membrane proteins during membrane integration.

It localises to the cell inner membrane. Functionally, required for the insertion and/or proper folding and/or complex formation of integral membrane proteins into the membrane. Involved in integration of membrane proteins that insert both dependently and independently of the Sec translocase complex, as well as at least some lipoproteins. Aids folding of multispanning membrane proteins. This chain is Membrane protein insertase YidC, found in Pseudomonas putida (strain ATCC 700007 / DSM 6899 / JCM 31910 / BCRC 17059 / LMG 24140 / F1).